Consider the following 82-residue polypeptide: Envelope small membrane protein (82 aa).

The Virion surface segment spans residues 1 to 19; it reads MTFPRAFTIIDDHGMVVSV. The helical transmembrane segment at 20–40 threads the bilayer; the sequence is FFWLLLIIILILFSIALLNVI. Over 41-82 the chain is Intravirion; sequence KLCMVCCNLGKTIIVLPARHAYDAYKTFMQTKAYNPDEAFLV.

Belongs to the alphacoronaviruses E protein family. Homopentamer. Interacts with membrane protein M in the budding compartment of the host cell, which is located between endoplasmic reticulum and the Golgi complex. Interacts with Nucleoprotein.

The protein resides in the host Golgi apparatus membrane. Its function is as follows. Plays a central role in virus morphogenesis and assembly. Acts as a viroporin and self-assembles in host membranes forming pentameric protein-lipid pores that allow ion transport. Also plays a role in the induction of apoptosis. In Feline coronavirus (strain FIPV WSU-79/1146) (FCoV), this protein is Envelope small membrane protein.